We begin with the raw amino-acid sequence, 218 residues long: Pyridoxine/pyridoxamine 5'-phosphate oxidase (218 aa).

Residues 14-17 (RREY) and Lys-72 each bind substrate. Residues 67–72 (RIVLLK), 82–83 (YT), Arg-88, Lys-89, and Gln-111 contribute to the FMN site. Positions 129, 133, and 137 each coordinate substrate. Residues 146 to 147 (QS) and Trp-191 each bind FMN. 197–199 (RLH) is a substrate binding site. An FMN-binding site is contributed by Arg-201.

This sequence belongs to the pyridoxamine 5'-phosphate oxidase family. Homodimer. FMN is required as a cofactor.

The enzyme catalyses pyridoxamine 5'-phosphate + O2 + H2O = pyridoxal 5'-phosphate + H2O2 + NH4(+). It catalyses the reaction pyridoxine 5'-phosphate + O2 = pyridoxal 5'-phosphate + H2O2. Its pathway is cofactor metabolism; pyridoxal 5'-phosphate salvage; pyridoxal 5'-phosphate from pyridoxamine 5'-phosphate: step 1/1. The protein operates within cofactor metabolism; pyridoxal 5'-phosphate salvage; pyridoxal 5'-phosphate from pyridoxine 5'-phosphate: step 1/1. Its function is as follows. Catalyzes the oxidation of either pyridoxine 5'-phosphate (PNP) or pyridoxamine 5'-phosphate (PMP) into pyridoxal 5'-phosphate (PLP). In Citrobacter koseri (strain ATCC BAA-895 / CDC 4225-83 / SGSC4696), this protein is Pyridoxine/pyridoxamine 5'-phosphate oxidase.